Consider the following 281-residue polypeptide: Protein UL24 (281 aa).

The tract at residues 199–252 (AVPPEPQTRRSRRRVAATARPQRPPSPTRDPEGTAGHPAPPESDPPSPGVVGVA) is disordered. Residues 236-246 (PAPPESDPPSP) are compositionally biased toward pro residues.

The protein belongs to the herpesviridae UL24 family.

It localises to the virion. The protein localises to the host cytoplasm. It is found in the host nucleus. Its subcellular location is the host nucleolus. The protein resides in the host Golgi apparatus. Functionally, may participate in nuclear egress of viral particles. Plays a role in the dispersal of several host nucleolar proteins including NCL/nucleolin and NPM1. Since deletion of host NCL/nucleolin negatively impact on nuclear egress, UL24 supposedly acts on this process through its effect on host nucleoli. The chain is Protein UL24 from Human herpesvirus 2 (strain HG52) (HHV-2).